The sequence spans 269 residues: Thymidylate synthase (269 aa).

Residue R26 coordinates dUMP. H56 contributes to the (6R)-5,10-methylene-5,6,7,8-tetrahydrofolate binding site. A dUMP-binding site is contributed by 131–132; sequence RR. Catalysis depends on C151, which acts as the Nucleophile. DUMP contacts are provided by residues 171–174, N182, and 212–214; these read RSAD and HIY. A (6R)-5,10-methylene-5,6,7,8-tetrahydrofolate-binding site is contributed by D174. A268 provides a ligand contact to (6R)-5,10-methylene-5,6,7,8-tetrahydrofolate.

The protein belongs to the thymidylate synthase family. Bacterial-type ThyA subfamily. As to quaternary structure, homodimer.

The protein localises to the cytoplasm. It carries out the reaction dUMP + (6R)-5,10-methylene-5,6,7,8-tetrahydrofolate = 7,8-dihydrofolate + dTMP. It participates in pyrimidine metabolism; dTTP biosynthesis. Its function is as follows. Catalyzes the reductive methylation of 2'-deoxyuridine-5'-monophosphate (dUMP) to 2'-deoxythymidine-5'-monophosphate (dTMP) while utilizing 5,10-methylenetetrahydrofolate (mTHF) as the methyl donor and reductant in the reaction, yielding dihydrofolate (DHF) as a by-product. This enzymatic reaction provides an intracellular de novo source of dTMP, an essential precursor for DNA biosynthesis. The polypeptide is Thymidylate synthase (Leifsonia xyli subsp. xyli (strain CTCB07)).